The sequence spans 313 residues: Protein FixB (313 aa).

255-283 is a binding site for FAD; sequence LYLAVGISGQIQHMVGANASQTIFAINKD.

Belongs to the ETF alpha-subunit/FixB family. Heterodimer of FixA and FixB.

It participates in amine and polyamine metabolism; carnitine metabolism. Its function is as follows. Required for anaerobic carnitine reduction. May bring reductant to CaiA. This chain is Protein FixB, found in Escherichia coli (strain SMS-3-5 / SECEC).